Consider the following 687-residue polypeptide: Adhesion G-protein coupled receptor G1 (687 aa).

An N-terminal signal peptide occupies residues 1–25 (MTAQSLLQTTLFLLSLLFLVQGAHG). 26–33 (RGHREDFR) contributes to the heparin binding site. Over 26 to 402 (RGHREDFRFC…VEVDAVHKHY (377 aa)) the chain is Extracellular. 2 disulfide bridges follow: cysteine 35–cysteine 91 and cysteine 121–cysteine 177. N-linked (GlcNAc...) asparagine glycosylation is found at asparagine 39, asparagine 148, and asparagine 171. A heparin-binding site is contributed by 190–200 (LKHPQKASRRP). The region spanning 224-395 (DTVSFEEDRI…AVLMVSSVEV (172 aa)) is the GAIN-B domain. N-linked (GlcNAc...) asparagine glycans are attached at residues asparagine 234, asparagine 303, asparagine 324, and asparagine 341. 2 disulfide bridges follow: cysteine 346-cysteine 377 and cysteine 366-cysteine 379. The GPS stretch occupies residues 346–395 (CVFWVEDPTLSSPGHWSSAGCETVRRETQTSCLCNHLTYFAVLMVSSVEV). The tract at residues 384–397 (YFAVLMVSSVEVDA) is stachel. Residues 403–423 (LSLLSYVGCVVSALACVVTIA) form a helical membrane-spanning segment. The Cytoplasmic portion of the chain corresponds to 424–442 (AYLCSRRKPRDYTIKVHMN). The chain crosses the membrane as a helical span at residues 443–463 (LLLAVFLLDTSFLLSEPVALT). The Extracellular segment spans residues 464–470 (GSEAGCR). A helical transmembrane segment spans residues 471 to 491 (ASAIFLHFSLLACLSWMGLEG). Topologically, residues 492 to 512 (YNLYRLVVEVFGTYVPGYLLK) are cytoplasmic. Residues 513–533 (LSAMGWGFPIFLVTLVALVDV) form a helical membrane-spanning segment. Over 534–570 (DNYGPIILAVHRTPEGVIYPSMCWIRDSLVSYITNLG) the chain is Extracellular. A helical transmembrane segment spans residues 571–591 (LFSLVFLFNMAMLATMVVQIL). Over 592-603 (RLRPHTQKWSHV) the chain is Cytoplasmic. The helical transmembrane segment at 604–624 (LTLLGLSLVLGLPWALIFFSF) threads the bilayer. Topologically, residues 625-630 (ASGTFQ) are extracellular. Residues 631 to 651 (LVILYLFSIITSFQGFLIFIW) traverse the membrane as a helical segment. Residues 652–687 (YWSMRLQARGGPSPLKSNSDSARLPISSGSTSSSRI) are Cytoplasmic-facing. Positions 664 to 687 (SPLKSNSDSARLPISSGSTSSSRI) are disordered. Residues 678–687 (SSGSTSSSRI) are compositionally biased toward low complexity.

This sequence belongs to the G-protein coupled receptor 2 family. LN-TM7 subfamily. Heterodimer of 2 chains generated by proteolytic processing; the large extracellular N-terminal fragment (ADGRG1 NT) and the membrane-bound C-terminal fragment (ADGRG1-CT) predominantly remain associated and non-covalently linked. ADGRG1 NT self-associates in a trans-trans manner; the homophilic interaction enhances receptor signaling. Interacts with TGM2. Interacts with heparin; leading to the reduction of ADGRG1 shedding. Interacts with COL3A1. Part of a GPCR-tetraspanin complex at least consisting of ADGRG1, CD81, eventually CD9, and GNA11 in which CD81 is enhancing the association of ADGRG1 with GNA11. In terms of processing, autoproteolytically cleaved into 2 fragments; the large extracellular N-terminal fragment (ADGRG1 NT) and the membrane-bound C-terminal fragment (ADGRG1 CT) predominantly remain associated and non-covalently linked. Shedding to yield the secreted ADGRG1 N-terminal fragment seems to involve metalloprotease(s). Ubiquitinated. Undergoes polyubiquitination upon activation.

The protein resides in the cell membrane. It localises to the secreted. The protein localises to the membrane raft. Forms a heterodimer of 2 chains generated by proteolytic processing that remain associated through non-covalent interactions mediated by the GAIN-B domain. In the inactivated receptor, the Stachel sequence (also named stalk) is embedded in the GAIN-B domain, where it adopts a beta-strand conformation. On activation, the Stachel moves into the 7 transmembrane region and adopts a twisted hook-shaped configuration that forms contacts within the receptor, leading to coupling of a G-alpha protein, which activates signaling. The cleaved GAIN-B and N-terminal domains can then dissociate from the rest of the receptor. In terms of biological role, adhesion G-protein coupled receptor (aGPCR) for steroid hormone 17alpha-hydroxypregnenolone (17-OH), which is involved in cell adhesion and cell-cell interactions. Ligand binding causes a conformation change that triggers signaling via guanine nucleotide-binding proteins (G proteins) and modulates the activity of downstream effectors, such as RhoA pathway. ADGRG1 is coupled to G(12) and/or G(13) G proteins (GNA12 and GNA13, respectively) and mediates the activation Rho small GTPases. Acts as a potent suppressor of ferroptosis: binding to 17-OH-binding initiates signaling that down-regulates CD36 and alleviates ferroptosis-induced liver injury. Ligand-binding also induces cell adhesion activity via association with proteins such as collagen III/COL3A1 and TGM2. Mediates cell matrix adhesion in developing neurons and hematopoietic stem cells. Involved in cortical development, specifically in maintenance of the pial basement membrane integrity and in cortical lamination: association with COL3A1 in the developing brain inhibits neuronal migration via activation of the RhoA pathway. Together with TGM2, acts as a regulator of myelination and myelin repair in oligodendrocyte precursor cells. Acts as a hemostatic sensor of shear force: G protein-coupled receptor signaling is activated in response to shear force in platelets, promoting G(13) G protein signaling, and platelet shape change and aggregation in a COL3A1-dependent manner. Acts as an inhibitor of VEGFA production thereby inhibiting angiogenesis through a signaling pathway mediated by PRKCA. Plays a role in the maintenance of hematopoietic stem cells in bone marrow niche. Plays an essential role in testis development. The chain is Adhesion G-protein coupled receptor G1 (ADGRG1) from Pan troglodytes (Chimpanzee).